Consider the following 98-residue polypeptide: Small ribosomal subunit protein uS19 (98 aa).

Disordered regions lie at residues 1-30 (MARS…KKSV) and 78-98 (RTFH…PAKK). The span at 9–24 (PFADKHLTKKVEDANK) shows a compositional bias: basic and acidic residues.

The protein belongs to the universal ribosomal protein uS19 family.

Functionally, protein S19 forms a complex with S13 that binds strongly to the 16S ribosomal RNA. The sequence is that of Small ribosomal subunit protein uS19 from Anaeromyxobacter dehalogenans (strain 2CP-C).